A 444-amino-acid polypeptide reads, in one-letter code: MSPIAVTSQTPATEVPSVKEIPQVITKSSPVENLILTTYPEDSSPIPLQWGAPSTDSRGPIIATRYKEGLAKHNAIGAHSGSYCVYHALAVGTKQLDPEHVADYTNSQPAFAVPEQKTWYNDEDIVAMDPFGHLTPYLFDEVSTKENVEIRPTIAVTKATMQLFEMKDAVEKGRLEVDGEVVINKNGDLNVSKVAVEPVWYLPGVAKRFGVTEEELRKALFEDTNGMYPELVTRPDIKVFLPPIGGLTVYIFGNPDFVSDPSKKLALRVHDECNGSDVFGSDICTCRPYLMFGIEEAVKEAQNGGSGVVVYFRKEGRALGEVTKYLVYNARKRGGDTADEYFHRTECIAGVRDMRFQQLMPDVLKWLGISKIDRMLSMSNMKHDAIVDQGIPIIERIPIPDELVPPDSRVEIDAKINSGYFTNGKVMDKNELKSVQGRTWNDVK.

Arg-268–Glu-272 contributes to the GTP binding site. Zn(2+)-binding residues include Cys-273, Cys-284, and Cys-286. Residue Glu-315–Arg-317 coordinates GTP. Asp-353 (proton acceptor) is an active-site residue. Arg-355 (nucleophile) is an active-site residue. Residues Ser-377 and Lys-382 each coordinate GTP.

It belongs to the GTP cyclohydrolase II family.

Its subcellular location is the cytoplasm. The protein localises to the nucleus. Its function is as follows. Involved in uracil catabolism. This is Putative GTP cyclohydrolase URC1 (URC1) from Lachancea kluyveri (Yeast).